The following is a 527-amino-acid chain: MADNRDPASDQMKHWKEQRAAQKPDILTTGSGNPIGDKLNILTAGPRGPLLVQDVVFTDEMAHFDRERIPERVVHAKGAGAFGYFEVTHDITRFSKAKVFEHVGKRTPIAVRFSTVAGESGSADTVRDPRGFAVKFYTEDGNWDLVGNNTPIFFIRDAILFPSFIHSQKRNPQTHLKDPDMVWDFWSLRPESLHQVSFLFSDRGIPDGHRHMNGYGSHTFKLVNEKGEAVYCKFHYKTDQGIKNLSVEDAARLPQEDPDYGIRDLFNAIATGNYPSWTFYIQVMTFQEAEAFPFNPFDLTKVWPHSEYPLIPVGKLVLNRNPVNYFAEVEQMAFDPSNMPPGIEPSPDKMLQGRLFGYPDTHRHRLGANYLQIPVNCPFRARVANYQRDGPMCFQDNQGGAPNYYPNSFSAPEQTHSALEHCTRYSGDVQRFNSANEDNVTQVRTFYLNVLNEEERKRLCENIAGHLKDAQLFIQKKAVKNFSDVHPDYGARIQALLDKYNAEXPENAVHTYVQAGSHLAAREKANL.

Residues 1–22 are compositionally biased toward basic and acidic residues; the sequence is MADNRDPASDQMKHWKEQRAAQ. Positions 1–32 are disordered; that stretch reads MADNRDPASDQMKHWKEQRAAQKPDILTTGSG. Alanine 2 bears the N-acetylalanine mark. The residue at position 9 (serine 9) is a Phosphoserine. Lysine 13 carries the post-translational modification N6-succinyllysine. Residues histidine 75 and asparagine 148 contribute to the active site. NADP(+) is bound by residues histidine 194, serine 201, arginine 203, and asparagine 213. At lysine 221 the chain carries N6-succinyllysine. Lysine 233 is subject to N6-acetyllysine. NADP(+) contacts are provided by lysine 237, tryptophan 303, and histidine 305. Tyrosine 358 serves as a coordination point for heme. Serine 417 and serine 434 each carry phosphoserine. Lysine 480 carries the post-translational modification N6-acetyllysine; alternate. An N6-succinyllysine; alternate modification is found at lysine 480. An N6-acetyllysine modification is found at lysine 499. At threonine 511 the chain carries Phosphothreonine. Serine 517 is modified (phosphoserine). The Microbody targeting signal; atypical signature appears at 524 to 527; it reads KANL.

It belongs to the catalase family. As to quaternary structure, homotetramer. Interacts (via microbody targeting signal) with PEX5, monomeric form interacts with PEX5, leading to its translocation into peroxisomes. Heme is required as a cofactor. It depends on NADP(+) as a cofactor.

It localises to the peroxisome matrix. It carries out the reaction 2 H2O2 = O2 + 2 H2O. Its function is as follows. Catalyzes the degradation of hydrogen peroxide (H(2)O(2)) generated by peroxisomal oxidases to water and oxygen, thereby protecting cells from the toxic effects of hydrogen peroxide. Promotes growth of cells including T-cells, B-cells, myeloid leukemia cells, melanoma cells, mastocytoma cells and normal and transformed fibroblast cells. The protein is Catalase (CAT) of Sus scrofa (Pig).